The chain runs to 291 residues: ATP synthase gamma chain (291 aa).

It belongs to the ATPase gamma chain family. As to quaternary structure, F-type ATPases have 2 components, CF(1) - the catalytic core - and CF(0) - the membrane proton channel. CF(1) has five subunits: alpha(3), beta(3), gamma(1), delta(1), epsilon(1). CF(0) has three main subunits: a, b and c.

It is found in the cell inner membrane. Functionally, produces ATP from ADP in the presence of a proton gradient across the membrane. The gamma chain is believed to be important in regulating ATPase activity and the flow of protons through the CF(0) complex. The sequence is that of ATP synthase gamma chain from Aquifex aeolicus (strain VF5).